The primary structure comprises 229 residues: Ribonuclease 3 (229 aa).

The RNase III domain maps to 5–127 (LSRLERQLGY…LIGAIYLDAG (123 aa)). A Mg(2+)-binding site is contributed by Glu40. Asp44 is an active-site residue. Positions 113 and 116 each coordinate Mg(2+). Glu116 is an active-site residue. Residues 154–224 (DPKTRLQEFL…AAAALIALGV (71 aa)) form the DRBM domain.

Belongs to the ribonuclease III family. As to quaternary structure, homodimer. Mg(2+) is required as a cofactor.

Its subcellular location is the cytoplasm. It carries out the reaction Endonucleolytic cleavage to 5'-phosphomonoester.. Functionally, digests double-stranded RNA. Involved in the processing of primary rRNA transcript to yield the immediate precursors to the large and small rRNAs (23S and 16S). Processes some mRNAs, and tRNAs when they are encoded in the rRNA operon. Processes pre-crRNA and tracrRNA of type II CRISPR loci if present in the organism. The polypeptide is Ribonuclease 3 (Pseudomonas syringae pv. tomato (strain ATCC BAA-871 / DC3000)).